A 730-amino-acid chain; its full sequence is Regulatory factor X 4 (730 aa).

Positions 30–41 (YSSHTSLGNISN) are enriched in polar residues. A disordered region spans residues 30–59 (YSSHTSLGNISNDETDEEKENRASKPHSTP). Residues 61-136 (TLQWLGENYE…YHYYGIAVKE (76 aa)) constitute a DNA-binding region (RFX-type winged-helix). Residues 500-532 (EPAISTPSPVPFSPAASSSSVEIPSATSPVSNQ) form a disordered region. A compositionally biased stretch (low complexity) spans 512-528 (SPAASSSSVEIPSATSP).

The protein belongs to the RFX family.

The protein localises to the nucleus. Functionally, required for neural tube ciliogenesis during embryogenesis. The sequence is that of Regulatory factor X 4 from Xenopus laevis (African clawed frog).